We begin with the raw amino-acid sequence, 155 residues long: Small ribosomal subunit protein uS7 (155 aa).

This sequence belongs to the universal ribosomal protein uS7 family. As to quaternary structure, part of the 30S ribosomal subunit. Contacts proteins S9 and S11.

One of the primary rRNA binding proteins, it binds directly to 16S rRNA where it nucleates assembly of the head domain of the 30S subunit. Is located at the subunit interface close to the decoding center, probably blocks exit of the E-site tRNA. This Helicobacter acinonychis (strain Sheeba) protein is Small ribosomal subunit protein uS7.